We begin with the raw amino-acid sequence, 609 residues long: Zinc metalloproteinase-disintegrin-like VMP-III (609 aa).

The signal sequence occupies residues Met1–Ser20. The propeptide occupies Ile21–Ala189. A Peptidase M12B domain is found at Arg198–Pro393. Ca(2+)-binding residues include Glu201 and Asp285. Disulfide bonds link Cys308/Cys388, Cys348/Cys372, and Cys350/Cys355. Residue His333 participates in Zn(2+) binding. Residue Glu334 is part of the active site. Positions 337 and 343 each coordinate Zn(2+). The N-linked (GlcNAc...) asparagine glycan is linked to Asn371. Ca(2+) contacts are provided by Cys388, Asn391, Val403, Asn406, Leu408, Glu410, Glu413, and Asp416. The region spanning Pro401 to Asn487 is the Disintegrin domain. Disulfide bonds link Cys404-Cys433, Cys415-Cys428, Cys417-Cys423, Cys427-Cys450, Cys441-Cys447, Cys446-Cys472, Cys459-Cys479, Cys466-Cys498, Cys491-Cys503, Cys510-Cys560, Cys525-Cys571, Cys538-Cys548, Cys555-Cys597, and Cys591-Cys602. Residues Glu465 to Asp467 carry the D/ECD-tripeptide motif. Residues Asp467, Pro468, Glu470, Asp482, and Val483 each coordinate Ca(2+).

Belongs to the venom metalloproteinase (M12B) family. P-III subfamily. P-IIIa sub-subfamily. Monomer. The cofactor is Zn(2+). In terms of tissue distribution, expressed by the venom gland.

It localises to the secreted. Snake venom metalloproteinase that impairs hemostasis in the envenomed animal. In Crotalus viridis viridis (Prairie rattlesnake), this protein is Zinc metalloproteinase-disintegrin-like VMP-III.